A 296-amino-acid polypeptide reads, in one-letter code: Homoserine kinase (296 aa).

Position 84 to 94 (84 to 94 (PLARGLGSSSS)) interacts with ATP.

It belongs to the GHMP kinase family. Homoserine kinase subfamily.

It is found in the cytoplasm. The catalysed reaction is L-homoserine + ATP = O-phospho-L-homoserine + ADP + H(+). Its pathway is amino-acid biosynthesis; L-threonine biosynthesis; L-threonine from L-aspartate: step 4/5. Its function is as follows. Catalyzes the ATP-dependent phosphorylation of L-homoserine to L-homoserine phosphate. The chain is Homoserine kinase from Lactococcus lactis subsp. cremoris (strain SK11).